The chain runs to 208 residues: Glutathione S-transferase P (208 aa).

The 78-residue stretch at 1-78 folds into the GST N-terminal domain; sequence MTLKLTYFDI…HLARLNGLNG (78 aa). Residues Y7, W38, K42, 49 to 50, and 62 to 63 each bind glutathione; these read QV and QS. The 123-residue stretch at 80 to 202 folds into the GST C-terminal domain; that stretch reads NETETTFIDM…NKRAAINPPV (123 aa).

Belongs to the GST superfamily. Pi family. In terms of assembly, homodimer. In terms of tissue distribution, expressed in dopaminergic (DA) neuron (at protein levels).

The catalysed reaction is RX + glutathione = an S-substituted glutathione + a halide anion + H(+). Functionally, conjugation of reduced glutathione to a wide number of exogenous and endogenous hydrophobic electrophiles. Prevents dopaminergic CEP neuron degeneration in response to Mn(2+). This chain is Glutathione S-transferase P (gst-1), found in Caenorhabditis elegans.